Reading from the N-terminus, the 191-residue chain is SCO2-like protein RP031 (191 aa).

It belongs to the SCO1/2 family.

This chain is SCO2-like protein RP031, found in Rickettsia prowazekii (strain Madrid E).